Reading from the N-terminus, the 864-residue chain is Alpha-glucosidase (864 aa).

The signal sequence occupies residues 1-22; it reads MAKVSFIFVAIALITGNVLCQT. 3 N-linked (GlcNAc...) asparagine glycosylation sites follow: asparagine 187, asparagine 364, and asparagine 406. The Nucleophile role is filled by aspartate 430. Residue glutamate 433 is part of the active site. Residues asparagine 466 and asparagine 500 are each glycosylated (N-linked (GlcNAc...) asparagine). The active-site Proton donor is the aspartate 567. 2 N-linked (GlcNAc...) asparagine glycosylation sites follow: asparagine 568 and asparagine 734.

The protein belongs to the glycosyl hydrolase 31 family.

It catalyses the reaction Hydrolysis of terminal, non-reducing (1-&gt;4)-linked alpha-D-glucose residues with release of alpha-D-glucose.. Functionally, hydrolyzes not only malto-oligosaccharides but also soluble starch. The polypeptide is Alpha-glucosidase (Mucor javanicus).